A 146-amino-acid chain; its full sequence is Acidic phospholipase A2 S14-72F (146 aa).

A signal peptide spans 1-19 (MYPAHLLVLLAVCVSLLGA). Residues 20–27 (ASIPPQPL) constitute a propeptide that is removed on maturation. 7 disulfides stabilise this stretch: Cys-38–Cys-98, Cys-54–Cys-145, Cys-56–Cys-72, Cys-71–Cys-126, Cys-78–Cys-119, Cys-87–Cys-112, and Cys-105–Cys-117. Tyr-55, Gly-57, and Gly-59 together coordinate Ca(2+). His-75 is a catalytic residue. Asp-76 lines the Ca(2+) pocket. Asp-120 is a catalytic residue.

It belongs to the phospholipase A2 family. Group I subfamily. D49 sub-subfamily. Requires Ca(2+) as cofactor. In terms of tissue distribution, expressed by the venom gland.

The protein resides in the secreted. It carries out the reaction a 1,2-diacyl-sn-glycero-3-phosphocholine + H2O = a 1-acyl-sn-glycero-3-phosphocholine + a fatty acid + H(+). Snake venom phospholipase A2 (PLA2) that inhibits collagen-induced platelet aggregation. PLA2 catalyzes the calcium-dependent hydrolysis of the 2-acyl groups in 3-sn-phosphoglycerides. This is Acidic phospholipase A2 S14-72F from Austrelaps superbus (Lowland copperhead snake).